Here is a 525-residue protein sequence, read N- to C-terminus: Chromosomal replication initiator protein DnaA (525 aa).

The segment at 1–71 (MNDFWQHCSA…ADLAREFWNT (71 aa)) is domain I, interacts with DnaA modulators. Residues 71–188 (TPIEVQFVLD…AEADSMYERS (118 aa)) are domain II. Residues 160–181 (AAAGRRTWRPGPGAAPANGAEA) are disordered. The segment covering 169–181 (PGPGAAPANGAEA) has biased composition (low complexity). The segment at 189 to 405 (KLNPVLTFDN…GALRKILAYS (217 aa)) is domain III, AAA+ region. Residues Gly233, Gly235, Lys236, and Thr237 each coordinate ATP. The tract at residues 406–525 (KFHGREISIE…LHVLEQTLKG (120 aa)) is domain IV, binds dsDNA.

The protein belongs to the DnaA family. As to quaternary structure, oligomerizes as a right-handed, spiral filament on DNA at oriC.

Its subcellular location is the cytoplasm. In terms of biological role, plays an essential role in the initiation and regulation of chromosomal replication. ATP-DnaA binds to the origin of replication (oriC) to initiate formation of the DNA replication initiation complex once per cell cycle. Binds the DnaA box (a 9 base pair repeat at the origin) and separates the double-stranded (ds)DNA. Forms a right-handed helical filament on oriC DNA; dsDNA binds to the exterior of the filament while single-stranded (ss)DNA is stabiized in the filament's interior. The ATP-DnaA-oriC complex binds and stabilizes one strand of the AT-rich DNA unwinding element (DUE), permitting loading of DNA polymerase. After initiation quickly degrades to an ADP-DnaA complex that is not apt for DNA replication. Binds acidic phospholipids. This is Chromosomal replication initiator protein DnaA from Burkholderia vietnamiensis (strain G4 / LMG 22486) (Burkholderia cepacia (strain R1808)).